The sequence spans 211 residues: MFRNSYIQQNSDIQAAGGLVPMVVEQSARGERAYDIYSRLLKERVIFLVGPVEDYMANLICAQLLFLEAENPDKDIHLYINSPGGSVTAGMSIYDTMQFIKPNVSTTCIGQACSMGAFLLTAGAPGKRFCLPNSRVMIHQPLGGFQGQASDIEIHAKEILFIRERLNTLMAKHSGRTLEEIERDTNRDNFMSAEAAKEYGLIDEVINQRPA.

Ser114 (nucleophile) is an active-site residue. His139 is an active-site residue.

Belongs to the peptidase S14 family. In terms of assembly, fourteen ClpP subunits assemble into 2 heptameric rings which stack back to back to give a disk-like structure with a central cavity, resembling the structure of eukaryotic proteasomes.

The protein localises to the cytoplasm. It catalyses the reaction Hydrolysis of proteins to small peptides in the presence of ATP and magnesium. alpha-casein is the usual test substrate. In the absence of ATP, only oligopeptides shorter than five residues are hydrolyzed (such as succinyl-Leu-Tyr-|-NHMec, and Leu-Tyr-Leu-|-Tyr-Trp, in which cleavage of the -Tyr-|-Leu- and -Tyr-|-Trp bonds also occurs).. In terms of biological role, cleaves peptides in various proteins in a process that requires ATP hydrolysis. Has a chymotrypsin-like activity. Plays a major role in the degradation of misfolded proteins. The polypeptide is ATP-dependent Clp protease proteolytic subunit (Pseudomonas fluorescens (strain Pf0-1)).